Reading from the N-terminus, the 763-residue chain is MRFNHFSIVDKNFDEQLAELDQLGFRWSVFWDEKKILKDFLIQSPTDMTVLQANTELDVIEFLKSSIELDWEIFWNITLQLLDFVPNFDFEIGKATEFAKKLNLPQRDVEMTTETIISAFYYLLCSRRKSGMILVEHWVSEGLLPLDNHYHFFNDKSLATFDSSLLEREVVWVESPVDTEQKGKNDLIKIQIIRPKSTEKLPVVITASPYHLGINEKANDLALHEMNVDLEKKDSHKIHVQGKLPQKRPSETKELPIVDKAPYRFTHGWTYSLNDYFLTRGFASIYVAGVGTRGSNGFQTSGDYQQIYSMTAVIDWLNGRTRAYTSRKKTHEIKATWANGKVAMTGKSYLGTMAYGAATTGVDGLEVILAEAGISSWYNYYRENGLVRSPGGFPGEDLDVLAALTYSRNLDGADYLKGNDEYEKRLAEMTTALDRKSGDYNQFWHDRNYLINSDQVRADVLIVHGLQDWNVTPEQAYNFWQALPEGHAKHAFLHRGAHIYMNSWQSIDFSETINAYFSAKLLDRDLNLNLPPVILQENSKEQVWSAVSKFGGDDQLKLPLGKTAVSFAQFDNHYDDESFKKYSKDFNVFKKDLFENKANEAVIDLELPSELTINGPIELEIRLKLNDSKGLLSAQILDFGPKKRLEDKARVKDFKVLDRGRNFMLDDLVELPLVESPYQLVTKGFTNLQNKDLLTVSDLKADEWFTLKFELQPTIYHLEKADKLRVILYSTDFEHTVRDNRKVTYEIDLSQSKLIIPIESVKK.

Residues Ser-348, Asp-468, and His-498 each act as charge relay system in the active site.

This sequence belongs to the peptidase S15 family. In terms of assembly, homodimer.

The protein localises to the cytoplasm. It carries out the reaction Hydrolyzes Xaa-Pro-|- bonds to release unblocked, N-terminal dipeptides from substrates including Ala-Pro-|-p-nitroanilide and (sequentially) Tyr-Pro-|-Phe-Pro-|-Gly-Pro-|-Ile.. Functionally, removes N-terminal dipeptides sequentially from polypeptides having unsubstituted N-termini provided that the penultimate residue is proline. In Lactococcus lactis subsp. lactis (strain IL1403) (Streptococcus lactis), this protein is Xaa-Pro dipeptidyl-peptidase (pepX).